We begin with the raw amino-acid sequence, 137 residues long: SMR2 protein (137 aa).

The N-terminal stretch at 1–18 is a signal peptide; that stretch reads MLVVLLTAALLALSSAQN. The interval 14–113 is disordered; it reads SSAQNTDEEV…LHHRENLRPQ (100 aa). Low complexity predominate over residues 75–85; sequence QQQQPLPVENQ. Basic and acidic residues predominate over residues 99 to 110; that stretch reads PPPETLHHRENL.

It is found in the secreted. Unknown, male-specific function. This chain is SMR2 protein (Smr2), found in Rattus norvegicus (Rat).